The chain runs to 584 residues: Arginine--tRNA ligase (584 aa).

The 'HIGH' region motif lies at 126-136; it reads PNIAKEMHVGH.

This sequence belongs to the class-I aminoacyl-tRNA synthetase family. Monomer.

It is found in the cytoplasm. The enzyme catalyses tRNA(Arg) + L-arginine + ATP = L-arginyl-tRNA(Arg) + AMP + diphosphate. This is Arginine--tRNA ligase from Synechococcus sp. (strain ATCC 27144 / PCC 6301 / SAUG 1402/1) (Anacystis nidulans).